The following is a 314-amino-acid chain: Ribonuclease Z (314 aa).

Zn(2+) contacts are provided by His-60, His-62, Asp-64, His-65, His-140, Asp-209, and His-269. Asp-64 functions as the Proton acceptor in the catalytic mechanism.

The protein belongs to the RNase Z family. In terms of assembly, homodimer. Requires Zn(2+) as cofactor.

The catalysed reaction is Endonucleolytic cleavage of RNA, removing extra 3' nucleotides from tRNA precursor, generating 3' termini of tRNAs. A 3'-hydroxy group is left at the tRNA terminus and a 5'-phosphoryl group is left at the trailer molecule.. Zinc phosphodiesterase, which displays some tRNA 3'-processing endonuclease activity. Probably involved in tRNA maturation, by removing a 3'-trailer from precursor tRNA. This is Ribonuclease Z from Methanococcus maripaludis (strain C5 / ATCC BAA-1333).